Reading from the N-terminus, the 2194-residue chain is PDZ and LIM domain protein Zasp (2194 aa).

One can recognise a PDZ domain in the interval 8-90 (QIKLSRFDAQ…NFVITVQRGG (83 aa)). The segment at 211–277 (TGQSTPAFGN…KPPSTGGLPT (67 aa)) is disordered. Over residues 228–253 (PQQLQQPQQQYNQHQQHYHQQQQQQQ) the composition is skewed to low complexity. The LIM zinc-binding 1 domain occupies 280–339 (NICTECERLITGVFVRIKDKNLHVECFKCATCGTSLKNQGYYNFNNKLYCDIHAKQAAIN). The segment covering 415-435 (AATPQAATATDSPAATASSSD) has biased composition (low complexity). Disordered regions lie at residues 415-436 (AATP…SSDN), 457-476 (VALA…DQPF), 511-558 (GAAA…AVEE), 580-611 (SRQS…YIPP), 623-692 (VQQV…TTSE), 896-940 (AAAA…PRGS), 1223-1260 (LTQK…QRTQ), 1297-1322 (QSQS…PPAN), 1550-1632 (LNAS…QQPE), 1646-1738 (QREQ…YGKT), and 1815-1837 (APPP…SGYQ). A compositionally biased stretch (low complexity) spans 515 to 530 (PKSPVSYPPQQQQQSP). Composition is skewed to polar residues over residues 580 to 590 (SRQSQRGSSFT) and 644 to 667 (VGTS…TASA). A compositionally biased stretch (low complexity) spans 676–692 (SSDSYTSTSTTTTTTSE). The segment covering 1598 to 1610 (QTGSITTGQSYQG) has biased composition (polar residues). Low complexity-rich tracts occupy residues 1616-1630 (SEQS…YNQQ), 1646-1668 (QREQ…TRSQ), and 1699-1727 (SQSV…QNQS). 3 consecutive LIM zinc-binding domains span residues 2018 to 2078 (PLCN…KYLA), 2079 to 2138 (PTCS…LFTT), and 2139 to 2194 (KCFA…NHAR).

Interacts with alpha-actinin (Actn). In terms of tissue distribution, expression is first detected in the proctodeum and the midgut primordium. In stage 11 embryos, expression is predominant in the leading edge of epidermal cells adjacent to the amnioserosa. Stage 12 embryos exhibit expression in the midgut and the leading edge. Expressed in several rows of germ band cells next to the leading edge at stage 14. Strong expression is visible in the midgut and pharyngeal muscles of stage 17 embryos. Also expressed in somatic muscles and visceral mesoderm. Colocalizes with mys (beta PS integrin) in myotendinous junctions and with Actn in muscle Z lines.

The protein localises to the cytoplasm. It localises to the cytoskeleton. Regulator of cell matrix adhesion having two related functions, one upstream of Actn organizing the Z line and the other downstream of integrins regulating assembly of integrin adhesion sites. Also required for the formation of myotendinous junctions in muscles. The polypeptide is PDZ and LIM domain protein Zasp (Zasp52) (Drosophila melanogaster (Fruit fly)).